Reading from the N-terminus, the 1094-residue chain is MPRRSDLHRILVIGSGPIVIGQAAEFDYSGTQAIKALREEGYEVILVNSNPATIMTDPEFADRTYVEPVTPEFVEKVIAKERPDAVLPTMGGQTALNVALALHDSGVLAKYGCELIGANARAIRVAEDRKLFGEAMEKIGLRCPTGRTVTSLEEALSAVEETGFPAIIRPSFTLGGTGGGIAYNREEFETIVRRGLDLSPVHSVLIERSLLGWKEYELEVMRDCADNVVIVCSIENLDPMGVHTGDSITVAPAMTLTDREYQVMRDAAVAIIREIGVDAGGCNIQFAVNPTNGELIVIEMNPRVSRSSALASKATGFPIARIGAKLAVGYTLDEVPNDITKTTPASFEPVLDYVIVKCPRFAFEKFVSSDPGLTTQMKSVGESMAIGRTFKEAFQKALRALETGRSGWTIAERLQDDRLTEGSKEELRGALRRPTPERIFQLKRAMLLGMDTKELYEITAIDPWFLDQLRELIDAEQWYEKLTGVDAVSMRRMKRLGFSDRQLGALRGQSESDARAERWALGVRPSYKMIDTCAGEFPSSTPYLYGNYDEESEAATEGRKKVVILGSGPNRIGQGVEFDYCCVRAVLALREQGYETIMVNSNPETVSTDFDISDKLYFEPLSLEDVLEIVHREQPEGVIVQLGGQTPLKLTRPLEAAGVKILGTSPDAIDAAEDRRRFEAIARELGIEQPANGTATSVDEAVTIAQRIGFPVLVRPSYVLGGRAMEIVHDEVSLRDYFERAARVSEERPVLVDRFLEDAFEADVDALSDGTDVVIGAVMEHIESAGIHSGDSACILPPYLIPAAAVAQMKEHTIAFAKRLGVVGLINVQYAYKDGQVYVIEVNPRASRTAPFVSKAIGVSLPSVAARLMLGETLAEVGFTQEIIPPYISVKEAVFPFNKFREFDPVLGPEMRSTGEVMGIDDDFGAAFMKSQLAADNALPREGTVFFTVSDGDKPTAASLAGKFHSIGFSIMATSGTAAFFREQGIPVTSVLKVHEGRPHGVDKILNGEVQLLVNTPLGKHAQVDDEKLRQAAIANRLPYTTTLTAASAAFEAIAARRTREPVVRSLQEWHEILRAPGAVESATAGSTQPAGVA.

Positions 1-402 (MPRRSDLHRI…AFQKALRALE (402 aa)) are carboxyphosphate synthetic domain. Residues R129, R169, G175, G176, R208, L210, E215, G241, V242, H243, Q285, and E299 each coordinate ATP. The 196-residue stretch at 133–328 (GEAMEKIGLR…IARIGAKLAV (196 aa)) folds into the ATP-grasp 1 domain. Q285, E299, and N301 together coordinate Mg(2+). Mn(2+)-binding residues include Q285, E299, and N301. Residues 403 to 552 (TGRSGWTIAE…YLYGNYDEES (150 aa)) form an oligomerization domain region. Residues 553-936 (EAATEGRKKV…AFMKSQLAAD (384 aa)) are carbamoyl phosphate synthetic domain. An ATP-grasp 2 domain is found at 679-870 (EAIARELGIE…LPSVAARLML (192 aa)). Residues R715, R754, L756, E761, G786, I787, H788, S789, Q829, and E841 each contribute to the ATP site. 3 residues coordinate Mg(2+): Q829, E841, and N843. Q829, E841, and N843 together coordinate Mn(2+). The region spanning 937 to 1077 (NALPREGTVF…QEWHEILRAP (141 aa)) is the MGS-like domain. Positions 937-1094 (NALPREGTVF…AGSTQPAGVA (158 aa)) are allosteric domain.

Belongs to the CarB family. As to quaternary structure, composed of two chains; the small (or glutamine) chain promotes the hydrolysis of glutamine to ammonia, which is used by the large (or ammonia) chain to synthesize carbamoyl phosphate. Tetramer of heterodimers (alpha,beta)4. Mg(2+) serves as cofactor. Mn(2+) is required as a cofactor.

It catalyses the reaction hydrogencarbonate + L-glutamine + 2 ATP + H2O = carbamoyl phosphate + L-glutamate + 2 ADP + phosphate + 2 H(+). The enzyme catalyses hydrogencarbonate + NH4(+) + 2 ATP = carbamoyl phosphate + 2 ADP + phosphate + 2 H(+). The protein operates within amino-acid biosynthesis; L-arginine biosynthesis; carbamoyl phosphate from bicarbonate: step 1/1. It participates in pyrimidine metabolism; UMP biosynthesis via de novo pathway; (S)-dihydroorotate from bicarbonate: step 1/3. Large subunit of the glutamine-dependent carbamoyl phosphate synthetase (CPSase). CPSase catalyzes the formation of carbamoyl phosphate from the ammonia moiety of glutamine, carbonate, and phosphate donated by ATP, constituting the first step of 2 biosynthetic pathways, one leading to arginine and/or urea and the other to pyrimidine nucleotides. The large subunit (synthetase) binds the substrates ammonia (free or transferred from glutamine from the small subunit), hydrogencarbonate and ATP and carries out an ATP-coupled ligase reaction, activating hydrogencarbonate by forming carboxy phosphate which reacts with ammonia to form carbamoyl phosphate. The chain is Carbamoyl phosphate synthase large chain from Gemmatimonas aurantiaca (strain DSM 14586 / JCM 11422 / NBRC 100505 / T-27).